Consider the following 513-residue polypeptide: Calcium-dependent protein kinase 2 (513 aa).

In terms of domain architecture, Protein kinase spans 65–323 (YSFGKELGRG…SAQVLQHQWL (259 aa)). Residues 71–79 (LGRGQFGVT) and Lys94 contribute to the ATP site. Asp189 acts as the Proton acceptor in catalysis. Residues 329-359 (ASDKPIDSAVLSRMKQFRAMNKLKKMALKVI) are autoinhibitory domain. EF-hand domains lie at 366–401 (EEIK…LGSK), 402–437 (LSEA…RHKL), 438–473 (ERDE…HEMG), and 478–508 (IREI…GMQQ). Asp379, Asp381, Ser383, Thr385, Glu390, Asp415, Asp417, Asn419, Ser421, Glu426, Asp451, Asp453, Ser455, Glu462, Asp486, Asp488, Asp490, Arg492, and Glu497 together coordinate Ca(2+).

This sequence belongs to the protein kinase superfamily. Ser/Thr protein kinase family. CDPK subfamily.

The enzyme catalyses L-seryl-[protein] + ATP = O-phospho-L-seryl-[protein] + ADP + H(+). It catalyses the reaction L-threonyl-[protein] + ATP = O-phospho-L-threonyl-[protein] + ADP + H(+). Activated by calcium. Autophosphorylation may play an important role in the regulation of the kinase activity. Its function is as follows. May play a role in signal transduction pathways that involve calcium as a second messenger. The protein is Calcium-dependent protein kinase 2 (CPK2) of Zea mays (Maize).